A 260-amino-acid chain; its full sequence is Pyridoxine 5'-phosphate synthase (260 aa).

3-amino-2-oxopropyl phosphate contacts are provided by N10 and R21. The active-site Proton acceptor is the H46. The 1-deoxy-D-xylulose 5-phosphate site is built by R48 and H53. Catalysis depends on E76, which acts as the Proton acceptor. Position 113 (T113) interacts with 1-deoxy-D-xylulose 5-phosphate. The active-site Proton donor is H204. 3-amino-2-oxopropyl phosphate-binding positions include D205 and 227-228; that span reads GH.

This sequence belongs to the PNP synthase family. Homooctamer; tetramer of dimers.

The protein localises to the cytoplasm. The enzyme catalyses 3-amino-2-oxopropyl phosphate + 1-deoxy-D-xylulose 5-phosphate = pyridoxine 5'-phosphate + phosphate + 2 H2O + H(+). It functions in the pathway cofactor biosynthesis; pyridoxine 5'-phosphate biosynthesis; pyridoxine 5'-phosphate from D-erythrose 4-phosphate: step 5/5. In terms of biological role, catalyzes the complicated ring closure reaction between the two acyclic compounds 1-deoxy-D-xylulose-5-phosphate (DXP) and 3-amino-2-oxopropyl phosphate (1-amino-acetone-3-phosphate or AAP) to form pyridoxine 5'-phosphate (PNP) and inorganic phosphate. This chain is Pyridoxine 5'-phosphate synthase, found in Xylella fastidiosa (strain 9a5c).